Consider the following 121-residue polypeptide: Large ribosomal subunit protein uL22 (121 aa).

Belongs to the universal ribosomal protein uL22 family. As to quaternary structure, part of the 50S ribosomal subunit.

Functionally, this protein binds specifically to 23S rRNA; its binding is stimulated by other ribosomal proteins, e.g. L4, L17, and L20. It is important during the early stages of 50S assembly. It makes multiple contacts with different domains of the 23S rRNA in the assembled 50S subunit and ribosome. In terms of biological role, the globular domain of the protein is located near the polypeptide exit tunnel on the outside of the subunit, while an extended beta-hairpin is found that lines the wall of the exit tunnel in the center of the 70S ribosome. This is Large ribosomal subunit protein uL22 from Salinibacter ruber (strain DSM 13855 / M31).